The chain runs to 320 residues: Olfactory receptor 51E2 (320 aa).

Topologically, residues 1–27 (MSSCNFTHATFLLIGIPGLEEAHFWFG) are extracellular. Residue asparagine 5 is glycosylated (N-linked (GlcNAc...) asparagine). Residues 28–48 (FPLLSMYAVALFGNCIVVFIV) form a helical membrane-spanning segment. Residues 49–53 (RTERS) lie on the Cytoplasmic side of the membrane. Residues 54-74 (LHAPMYLFLCMLAAIDLALST) form a helical membrane-spanning segment. Residues 75 to 98 (STMPKILALFWFDSREITFDACLA) lie on the Extracellular side of the membrane. The cysteines at positions 96 and 178 are disulfide-linked. Residues 99–119 (QMFFIHTLSAIESTILLAMAF) form a helical membrane-spanning segment. Residues 120-141 (DRYVAICHPLRHAAVLNNTVTV) lie on the Cytoplasmic side of the membrane. The chain crosses the membrane as a helical span at residues 142–162 (QIGMVALVRGSLFFFPLPLLI). Residues 163-200 (KRLAFCHSNVLSHSYCVHQDVMKLAYTDTLPNVVYGLT) lie on the Extracellular side of the membrane. The chain crosses the membrane as a helical span at residues 201-221 (AILLVMGVDVMFISLSYFLII). At 222–239 (RTVLQLPSKSERAKAFGT) the chain is on the cytoplasmic side. A helical transmembrane segment spans residues 240–260 (CVSHISVVLAFYVPLIGLSVV). The Extracellular segment spans residues 261 to 269 (HRFGNSLDP). A helical transmembrane segment spans residues 270–290 (IVHVLMGDVYLLLPPVINPII). At 291–320 (YGAKTKQIRTRVLAMFKISCDKDIEAGGNT) the chain is on the cytoplasmic side.

Belongs to the G-protein coupled receptor 1 family. In terms of tissue distribution, in brain, expressed in medulla oblongata by cells close to the fourth ventricle, in the area postrema, the nucleus tractus solitarius. Expressed in olfactory epithelium and vomeronasal organ. Expressed in kidney by large renal vessels, renal afferent arterioles, and extrarenal vascular beds. In small resistance vessels the expression is restricted to cells of the juxtaglomerular afferent arteriole, which mediate renin secretion. Also detected in small blood vessels in a variety of tissues including heart, diaphragm, skeletal muscle, and skin. In the heart, esophagus, and stomach it is detected in axons of autonomic neurons and neurons of the enteric plexus. Also detected in colon and liver. Expressed in the glomus cells of the carotid body.

The protein localises to the cell membrane. Its subcellular location is the early endosome membrane. Functionally, olfactory receptor. The activity of this receptor is probably mediated by G-proteins which induce elevation of intracellular Ca(2+), cAMP and activation of phosphorylation of the protein kinases PKA and MAPK3/MAPK1. Activation of OR51E2 may affect melanocyte proliferation, differentiation, and melanogenesis and may increase proliferation and migration of primary retinal pigment epithelial (RPE) cells. Activated by the short chain fatty acids (SCFA), acetate and propionate. In response to SCFA, may positively regulate renin secretion and increase blood pressure. May also be activated by steroid hormones and regulate cell proliferation. Activated by L-lactate in glomus cells. In Mus musculus (Mouse), this protein is Olfactory receptor 51E2 (Or51e2).